Reading from the N-terminus, the 434-residue chain is MTTQVVNVIGAGLAGSEAAYQIAKRGVQVRLYEMRPVRQTPAHHTDKFAELVCSNSLRANTLTNAVGVIKEEMRLMDSVIIRAADECSVPAGGALAVDRHEFAAKVTEYVKNHPNVTVVNEELTEIPEGPTIIATGPLTSPDLAAQLKELTGEDYFYFYDAAAPIVEKDSIDMNKVYLKSRYDKGEAAYLNCPMTEEEFDRFYEALIAAETVPLKEFEKEIFFEGCMPVEVMASRGRQTLVFGPMKPVGLEDPKTGKTPYAVVQLRQDDAAGTLYNIVGFQTHLKWGPQKEVLQLIPGLENAEIVRYGVMHRNTFINSPNLLRPTYQYKQRDDLFFAGQMTGVEGYVESAASGLLAGINAARLVQGEEPVVLPSVTAMGSMANYITATNAKNFQPMNANFGLFAPLEKKIKKKAERNEAYATRALETIQNFVNI.

Position 10-15 (10-15) interacts with FAD; sequence GAGLAG.

This sequence belongs to the MnmG family. TrmFO subfamily. It depends on FAD as a cofactor.

It localises to the cytoplasm. It carries out the reaction uridine(54) in tRNA + (6R)-5,10-methylene-5,6,7,8-tetrahydrofolate + NADH + H(+) = 5-methyluridine(54) in tRNA + (6S)-5,6,7,8-tetrahydrofolate + NAD(+). The catalysed reaction is uridine(54) in tRNA + (6R)-5,10-methylene-5,6,7,8-tetrahydrofolate + NADPH + H(+) = 5-methyluridine(54) in tRNA + (6S)-5,6,7,8-tetrahydrofolate + NADP(+). In terms of biological role, catalyzes the folate-dependent formation of 5-methyl-uridine at position 54 (M-5-U54) in all tRNAs. This Bacillus cereus (strain G9842) protein is Methylenetetrahydrofolate--tRNA-(uracil-5-)-methyltransferase TrmFO.